Here is a 345-residue protein sequence, read N- to C-terminus: SLAM family member 5 (345 aa).

An N-terminal signal peptide occupies residues 1 to 21 (MAQHHLWILLLCLQTWPEAAG). Topologically, residues 22-225 (KDSEIFTVNG…AMGFRTHHTG (204 aa)) are extracellular. Residues 26–129 (IFTVNGILGE…TTKRYNLQIY (104 aa)) form the Ig-like V-type domain. The Ig-like C2-type domain maps to 135-207 (PKITQSLMAS…PVSNNSDSIS (73 aa)). The N-linked (GlcNAc...) asparagine glycan is linked to asparagine 150. The cysteines at positions 155 and 193 are disulfide-linked. Residues 226-246 (LLSVLAMFFLLVLILSSVFLF) form a helical membrane-spanning segment. Residues 247–345 (RLFKRRQGRI…PGTSSYEIVI (99 aa)) lie on the Cytoplasmic side of the membrane. The ITSM 1 signature appears at 277–282 (TIYTYI). Position 279 is a phosphotyrosine (tyrosine 279). Tyrosine 296 is modified (phosphotyrosine; by LYN). The ITSM 2 motif lies at 314–319 (TVYSEV). Tyrosine 316 carries the post-translational modification Phosphotyrosine. Residues 326 to 345 (GKASTQDSKPPGTSSYEIVI) form a disordered region. The span at 328–345 (ASTQDSKPPGTSSYEIVI) shows a compositional bias: polar residues. Tyrosine 341 carries the post-translational modification Phosphotyrosine; by FES.

Homodimer; via its extracellular domain. Forms a head to tail dimer with a CD48 molecule from another cell. Interacts with SH2 domain-containing proteins SH2D1A/SAP and SH2D1B/EAT-2. Interacts with tyrosine-protein phosphatases PTPN6/SHP-1 and PTPN11//SHP-2 via its phosphorylated cytoplasmic domain, and this interaction is blocked by SH2D1A. Interacts (via phosphorylated ITSM 1 and 2) with INPP5D/SHIP1. Post-translationally, phosphorylated by tyrosine-protein kinase LCK on tyrosine residues following ligation induced by agonist monoclonal antibody. The association with SH2D1A is dependent of tyrosine phosphorylation of its cytoplasmic domain. Phosphorylated on Tyr-296 and Tyr-316 following platelet aggregation. Phosphorylated on tyrosine residues upon high affinity immunoglobulin epsilon receptor aggregation in mast cells. N-glycosylated. As to expression, predominantly expressed in hematopoietic tissues, such as lymph node, spleen and peripheral leukocytes. Expressed in macrophages, B-cells, monocytes, platelets, thymocytes, T-cells and dendritic cells. Highly expressed in memory T-cells. Expressed in mast cells.

It is found in the cell membrane. Self-ligand receptor of the signaling lymphocytic activation molecule (SLAM) family. SLAM receptors triggered by homo- or heterotypic cell-cell interactions are modulating the activation and differentiation of a wide variety of immune cells and thus are involved in the regulation and interconnection of both innate and adaptive immune response. Activities are controlled by presence or absence of small cytoplasmic adapter proteins, SH2D1A/SAP and/or SH2D1B/EAT-2. Can mediate natural killer (NK) cell cytotoxicity dependent on SH2D1A and SH2D1B. Increases proliferative responses of activated T-cells and SH2D1A/SAP does not seem be required for this process. Homophilic interactions enhance interferon gamma/IFNG secretion in lymphocytes and induce platelet stimulation via a SH2D1A-dependent pathway. May serve as a marker for hematopoietic progenitor cells Required for a prolonged T-cell:B-cell contact, optimal T follicular helper function, and germinal center formation. In germinal centers involved in maintaining B-cell tolerance and in preventing autoimmunity. In mast cells negatively regulates high affinity immunoglobulin epsilon receptor signaling; independent of SH2D1A and SH2D1B but implicating FES and PTPN6/SHP-1. In macrophages enhances LPS-induced MAPK phosphorylation and NF-kappaB activation and modulates LPS-induced cytokine secretion; involving ITSM 2. Positively regulates macroautophagy in primary dendritic cells via stabilization of IRF8; inhibits TRIM21-mediated proteasomal degradation of IRF8. This chain is SLAM family member 5 (CD84), found in Homo sapiens (Human).